Here is a 210-residue protein sequence, read N- to C-terminus: MIGIYGGTFDPVHYGHLRAALEVREDLELRELRFLPCHQPPHRPPPVADPQTRLRMLEIALADADGGFALDTRELDRGGPSYMVDTLSSIRKETGDEPLCLIVGLDAFLALPAWHRWRRLFSLAHIVVLQRPDYDIEYAEDLKHCVEERQVTDPTQLAAQPDGMIYFLEVTQLAIASTSIRRMLREGRSAKYLLPDAVLELIHRESLYAK.

This sequence belongs to the NadD family.

The catalysed reaction is nicotinate beta-D-ribonucleotide + ATP + H(+) = deamido-NAD(+) + diphosphate. It functions in the pathway cofactor biosynthesis; NAD(+) biosynthesis; deamido-NAD(+) from nicotinate D-ribonucleotide: step 1/1. Catalyzes the reversible adenylation of nicotinate mononucleotide (NaMN) to nicotinic acid adenine dinucleotide (NaAD). This chain is Probable nicotinate-nucleotide adenylyltransferase, found in Methylococcus capsulatus (strain ATCC 33009 / NCIMB 11132 / Bath).